The sequence spans 177 residues: Bifunctional protein PyrR (177 aa).

The PRPP-binding motif lies at 99 to 111 (VVLVDDVLFTGRT).

Belongs to the purine/pyrimidine phosphoribosyltransferase family. PyrR subfamily.

The catalysed reaction is UMP + diphosphate = 5-phospho-alpha-D-ribose 1-diphosphate + uracil. Regulates the transcription of the pyrimidine nucleotide (pyr) operon in response to exogenous pyrimidines. Its function is as follows. Also displays a weak uracil phosphoribosyltransferase activity which is not physiologically significant. The chain is Bifunctional protein PyrR from Citrifermentans bemidjiense (strain ATCC BAA-1014 / DSM 16622 / JCM 12645 / Bem) (Geobacter bemidjiensis).